The following is a 433-amino-acid chain: 28S rRNA (cytosine-C(5))-methyltransferase (433 aa).

S-adenosyl-L-methionine is bound by residues 235–241 (CAAPGMK), Glu-259, Asp-286, and Asp-304. The active-site Nucleophile is Cys-357.

It belongs to the class I-like SAM-binding methyltransferase superfamily. RsmB/NOP family.

It catalyses the reaction a cytidine in 28S rRNA + S-adenosyl-L-methionine = a 5-methylcytidine in 28S rRNA + S-adenosyl-L-homocysteine + H(+). In terms of biological role, S-adenosyl-L-methionine-dependent methyltransferase that specifically methylates the C(5) position of a cytosine in 28S rRNA. In Drosophila melanogaster (Fruit fly), this protein is 28S rRNA (cytosine-C(5))-methyltransferase.